Reading from the N-terminus, the 94-residue chain is Large ribosomal subunit protein uL24c (94 aa).

This sequence belongs to the universal ribosomal protein uL24 family. Part of the 50S ribosomal subunit.

It localises to the plastid. The protein resides in the chloroplast. Functionally, one of two assembly initiator proteins, it binds directly to the 5'-end of the 23S rRNA, where it nucleates assembly of the 50S subunit. In Cyanidium caldarium (Red alga), this protein is Large ribosomal subunit protein uL24c (rpl24).